The chain runs to 166 residues: Putative peptidyl-prolyl cis-trans isomerase dodo (166 aa).

The region spanning 5–39 (EQLPDGWEKRTSRSTGMSYYLNMYTKESQWDQPTE) is the WW domain. Positions 32–53 (SQWDQPTEPAKKAGGGSAGGGD) are disordered. Residues 44 to 53 (AGGGSAGGGD) are compositionally biased toward gly residues. The 112-residue stretch at 55–166 (PDEVHCLHLL…SGLHIILRKA (112 aa)) folds into the PpiC domain.

It catalyses the reaction [protein]-peptidylproline (omega=180) = [protein]-peptidylproline (omega=0). In Drosophila melanogaster (Fruit fly), this protein is Putative peptidyl-prolyl cis-trans isomerase dodo (dod).